Consider the following 334-residue polypeptide: L-lactate dehydrogenase B chain (334 aa).

Position 2 is an N-acetylalanine (Ala2). N6-acetyllysine is present on Lys7. A phosphoserine mark is found at Ser11 and Ser44. Residues 30–58 (GQVGMACAISILGKSLADELALVDVLEDK) and Arg100 each bind NAD(+). Lys58 is modified (N6-acetyllysine). A substrate-binding site is contributed by Arg107. Residue Lys119 is modified to N6-acetyllysine. NAD(+) is bound at residue Asn139. Substrate contacts are provided by Asn139 and Arg170. Catalysis depends on His194, which acts as the Proton acceptor. A Phosphotyrosine modification is found at Tyr240. Thr249 contacts substrate. At Lys329 the chain carries N6-acetyllysine.

The protein belongs to the LDH/MDH superfamily. LDH family. In terms of assembly, homotetramer. Interacts with PTEN upstream reading frame protein MP31; the interaction leads to inhibition of mitochondrial lactate dehydrogenase activity, preventing conversion of lactate to pyruvate in mitochondria.

The protein localises to the cytoplasm. It is found in the mitochondrion inner membrane. It catalyses the reaction (S)-lactate + NAD(+) = pyruvate + NADH + H(+). The protein operates within fermentation; pyruvate fermentation to lactate; (S)-lactate from pyruvate: step 1/1. Functionally, interconverts simultaneously and stereospecifically pyruvate and lactate with concomitant interconversion of NADH and NAD(+). The polypeptide is L-lactate dehydrogenase B chain (Ldhb) (Mus musculus (Mouse)).